The following is a 355-amino-acid chain: tRNA-specific 2-thiouridylase MnmA (355 aa).

ATP-binding positions include 8–15 and M34; that span reads GMSGGVDS. The active-site Nucleophile is C103. A disulfide bridge links C103 with C199. Residue G127 coordinates ATP. Residues 149 to 151 form an interaction with tRNA region; the sequence is KDQ. The Cysteine persulfide intermediate role is filled by C199. Residues 305–306 form an interaction with tRNA region; sequence RY.

It belongs to the MnmA/TRMU family.

Its subcellular location is the cytoplasm. The enzyme catalyses S-sulfanyl-L-cysteinyl-[protein] + uridine(34) in tRNA + AH2 + ATP = 2-thiouridine(34) in tRNA + L-cysteinyl-[protein] + A + AMP + diphosphate + H(+). Its function is as follows. Catalyzes the 2-thiolation of uridine at the wobble position (U34) of tRNA, leading to the formation of s(2)U34. The chain is tRNA-specific 2-thiouridylase MnmA from Clostridium acetobutylicum (strain ATCC 824 / DSM 792 / JCM 1419 / IAM 19013 / LMG 5710 / NBRC 13948 / NRRL B-527 / VKM B-1787 / 2291 / W).